The primary structure comprises 117 residues: Putative membrane protein insertion efficiency factor (117 aa).

It belongs to the UPF0161 family.

Its subcellular location is the cell inner membrane. Functionally, could be involved in insertion of integral membrane proteins into the membrane. This Helicobacter pylori (strain ATCC 700392 / 26695) (Campylobacter pylori) protein is Putative membrane protein insertion efficiency factor.